The chain runs to 262 residues: Acyl-[acyl-carrier-protein]--UDP-N-acetylglucosamine O-acyltransferase (262 aa).

It belongs to the transferase hexapeptide repeat family. LpxA subfamily. Homotrimer.

It is found in the cytoplasm. It catalyses the reaction a (3R)-hydroxyacyl-[ACP] + UDP-N-acetyl-alpha-D-glucosamine = a UDP-3-O-[(3R)-3-hydroxyacyl]-N-acetyl-alpha-D-glucosamine + holo-[ACP]. It participates in glycolipid biosynthesis; lipid IV(A) biosynthesis; lipid IV(A) from (3R)-3-hydroxytetradecanoyl-[acyl-carrier-protein] and UDP-N-acetyl-alpha-D-glucosamine: step 1/6. Involved in the biosynthesis of lipid A, a phosphorylated glycolipid that anchors the lipopolysaccharide to the outer membrane of the cell. In Herminiimonas arsenicoxydans, this protein is Acyl-[acyl-carrier-protein]--UDP-N-acetylglucosamine O-acyltransferase.